A 972-amino-acid chain; its full sequence is MDTDLYDEFGNYIGPELDSDEDDDELGRETKDLDEMDDDDDDDDIGDHDDDHPGMEVVLHEDKKYYPTAEEVYGPEVETIVQEEDTQPLTEPIIKPVKTKKFTLMEQTLPVTVYEMDFLADLMDNSELIRNVTLCGHLHHGKTCFVDCLIEQTHPEIRKRYDQDLCYTDILFTEQERGVGIKSTPVTVVLPDTKGKSYLFNIMDTPGHVNFSDEVTAGLRISDGVVLFIDAAEGVMLNTERLIKHAVQERLAVTVCINKIDRLILELKLPPTDAYYKLRHIVDEVNGLISMYSTDENLILSPLLGNVCFSSSQYSICFTLGSFAKIYADTFGDINYQEFAKRLWGDIYFNPKTRKFTKKAPTSSSQRSFVEFILEPLYKILAQVVGDVDTSLPRTLDELGIHLTKEELKLNIRPLLRLVCKKFFGEFTGFVDMCVQHIPSPKVGAKPKIEHTYTGGVDSDLGEAMSDCDPDGPLMCHTTKMYSTDDGVQFHAFGRVLSGTIHAGQPVKVLGENYTLEDEEDSQICTVGRLWISVARYHIEVNRVPAGNWVLIEGVDQPIVKTATITEPRGNEEAQIFRPLKFNTTSVIKIAVEPVNPSELPKMLDGLRKVNKSYPSLTTKVEESGEHVILGTGELYLDCVMHDLPKMYSEIDIKVADPVVTFCETVVETSSLKCFAETPNKKNKITMIAEPLEKGLAEDIENEVVQITWNRKKLGEFFQTKYDWDLLAARSIWAFGPDATGPNILVDDTLPSEVDKALLGSVKDSIVQGFQWGTREGPLCDELIRNVKFKILDAVVAQEPLHRGGGQIIPTARRVVYSAFLMATPRLMEPYYFVEVQAPADCVSAVYTVLARRRGHVTQDAPIPGSPLYTIKAFIPAIDSFGFETDLRTHTQGQAFSLSVFHHWQIVPGDPLDKSIVIRPLEPQPAPHLAREFMIKTRRRKGLSEDVSISKFFDDPMLLELAKQDVVLNYPM.

Methionine 1 bears the N-acetylmethionine mark. Positions methionine 1–glycine 54 are disordered. 2 stretches are compositionally biased toward acidic residues: residues leucine 17–leucine 26 and aspartate 34–histidine 48. Position 19 is a phosphoserine (serine 19). A Glycyl lysine isopeptide (Lys-Gly) (interchain with G-Cter in SUMO1); alternate cross-link involves residue lysine 64. Lysine 64 participates in a covalent cross-link: Glycyl lysine isopeptide (Lys-Gly) (interchain with G-Cter in SUMO2); alternate. Threonine 86 carries the phosphothreonine modification. A tr-type G domain is found at glutamate 127–lysine 409. GTP-binding positions include glycine 136–threonine 143, aspartate 204–histidine 208, and asparagine 258–aspartate 261.

This sequence belongs to the TRAFAC class translation factor GTPase superfamily. Classic translation factor GTPase family. EF-G/EF-2 subfamily. Component of the U5 snRNP and the U4/U6-U5 tri-snRNP complex, a building block of the spliceosome. The U4/U6-U5 tri-snRNP complex is composed of the U4, U6 and U5 snRNAs and at least PRPF3, PRPF4, PRPF6, PRPF8, PRPF31, SNRNP200, TXNL4A, SNRNP40, DDX23, CD2BP2, PPIH, SNU13, EFTUD2, SART1 and USP39. Component of the pre-catalytic, catalytic and post-catalytic spliceosome complexes. Component of the minor spliceosome, which splices U12-type introns. Within this complex, interacts with CRIPT. Interacts with ERBB4 and PRPF8. Interacts with PIH1D1. Interacts with RPAP3 and URI1 in a ZNHIT2-dependent manner. Interacts with NRDE2. Interacts with FAM50A. Interacts with UBL5.

The protein resides in the nucleus. Required for pre-mRNA splicing as component of the spliceosome, including pre-catalytic, catalytic and post-catalytic spliceosomal complexes. Component of the U5 snRNP and the U4/U6-U5 tri-snRNP complex, a building block of the spliceosome. As a component of the minor spliceosome, involved in the splicing of U12-type introns in pre-mRNAs. The sequence is that of 116 kDa U5 small nuclear ribonucleoprotein component (EFTUD2) from Pongo abelii (Sumatran orangutan).